Here is a 211-residue protein sequence, read N- to C-terminus: MASGLKLPRLYAIVDADCFGPEPSLATLTHFAKELVAGGVTLLQYRNKQGSAREILSHARELKRALPPEVTLLLNDRADLAIAAGFHGVHVGQDDLSPEGARLVVGPEMFVGTSTHNPEQLQIADKATVDYLAIGPIFATKSKINPDPVVGLDRLRAVRKLTSKPLVAIGGITRENCRSVIDAGADSVAVIADLLVDPRQRASEFLQILHS.

Residues 44 to 48 (QYRNK) and Asn-75 contribute to the 4-amino-2-methyl-5-(diphosphooxymethyl)pyrimidine site. Positions 76 and 95 each coordinate Mg(2+). 4-amino-2-methyl-5-(diphosphooxymethyl)pyrimidine is bound at residue Ser-114. 140–142 (TKS) is a binding site for 2-[(2R,5Z)-2-carboxy-4-methylthiazol-5(2H)-ylidene]ethyl phosphate. 4-amino-2-methyl-5-(diphosphooxymethyl)pyrimidine is bound at residue Lys-143. Gly-171 serves as a coordination point for 2-[(2R,5Z)-2-carboxy-4-methylthiazol-5(2H)-ylidene]ethyl phosphate.

Belongs to the thiamine-phosphate synthase family. Mg(2+) is required as a cofactor.

The catalysed reaction is 2-[(2R,5Z)-2-carboxy-4-methylthiazol-5(2H)-ylidene]ethyl phosphate + 4-amino-2-methyl-5-(diphosphooxymethyl)pyrimidine + 2 H(+) = thiamine phosphate + CO2 + diphosphate. The enzyme catalyses 2-(2-carboxy-4-methylthiazol-5-yl)ethyl phosphate + 4-amino-2-methyl-5-(diphosphooxymethyl)pyrimidine + 2 H(+) = thiamine phosphate + CO2 + diphosphate. It catalyses the reaction 4-methyl-5-(2-phosphooxyethyl)-thiazole + 4-amino-2-methyl-5-(diphosphooxymethyl)pyrimidine + H(+) = thiamine phosphate + diphosphate. It participates in cofactor biosynthesis; thiamine diphosphate biosynthesis; thiamine phosphate from 4-amino-2-methyl-5-diphosphomethylpyrimidine and 4-methyl-5-(2-phosphoethyl)-thiazole: step 1/1. In terms of biological role, condenses 4-methyl-5-(beta-hydroxyethyl)thiazole monophosphate (THZ-P) and 2-methyl-4-amino-5-hydroxymethyl pyrimidine pyrophosphate (HMP-PP) to form thiamine monophosphate (TMP). This Koribacter versatilis (strain Ellin345) protein is Thiamine-phosphate synthase.